We begin with the raw amino-acid sequence, 92 residues long: Progonadoliberin-1 (92 aa).

Residues 1–23 (MGLIPKLLAGLVLLTLCVENGSG) form the signal peptide. Glutamine 24 carries the post-translational modification Pyrrolidone carboxylic acid. Glycine 33 carries the post-translational modification Glycine amide.

This sequence belongs to the GnRH family. Post-translationally, the precursor is cleaved by ACE, which removes the Gly-Lys-Arg peptide at the C-terminus, leading to mature hormone. The mature form of Gonadoliberin-1 is also cleaved and degraded by ACE.

It localises to the secreted. Functionally, stimulates the secretion of gonadotropins; it stimulates the secretion of both luteinizing and follicle-stimulating hormones. The chain is Progonadoliberin-1 (GNRH1) from Cavia porcellus (Guinea pig).